Reading from the N-terminus, the 396-residue chain is Protein GTS1 (396 aa).

In terms of domain architecture, Arf-GAP spans 14-141 (DRELKELINS…FRYDEIKPED (128 aa)). Residues 30–53 (CGECGNFYPTWCSVNLGVFLCGRC) form a C4-type zinc finger. The span at 148-161 (DFDGESDRFDERNR) shows a compositional bias: basic and acidic residues. Disordered stretches follow at residues 148-194 (DFDG…SGSR) and 233-266 (KSSS…QPAI). The residue at position 153 (S153) is a Phosphoserine. Y181 is modified (phosphotyrosine). Phosphoserine occurs at positions 184 and 187. Positions 193–234 (SRYSRQLAELKDMGFGDTNKNLDALSSAHGNINRAIDYLEKS) constitute a UBA domain. Residues 234-249 (SSSSRNSVSAAATTST) show a composition bias toward low complexity. S240 carries the post-translational modification Phosphoserine. T249 is subject to Phosphothreonine.

The protein resides in the nucleus. Functionally, appears to modulate the timing of budding to obtain an appropriate cell size independent of the DNA replication cycle. Transcription factor involved in both heat resistance and flocculation. The sequence is that of Protein GTS1 (GTS1) from Saccharomyces cerevisiae (strain ATCC 204508 / S288c) (Baker's yeast).